The sequence spans 401 residues: L-rhamnonate dehydratase (401 aa).

Substrate is bound by residues histidine 29 and arginine 55. Mg(2+) is bound by residues aspartate 222, glutamate 248, and glutamate 276. The active-site Proton acceptor is histidine 325. Glutamate 345 contacts substrate.

It belongs to the mandelate racemase/muconate lactonizing enzyme family. RhamD subfamily. Homooctamer; tetramer of dimers. Requires Mg(2+) as cofactor.

The catalysed reaction is L-rhamnonate = 2-dehydro-3-deoxy-L-rhamnonate + H2O. Catalyzes the dehydration of L-rhamnonate to 2-keto-3-deoxy-L-rhamnonate (KDR). Can also dehydrate L-lyxonate, L-mannonate and D-gulonate, although less efficiently, but not 2-keto-4-hydroxyheptane-1,7-dioate. This is L-rhamnonate dehydratase (rhmD) from Escherichia coli (strain K12).